Reading from the N-terminus, the 93-residue chain is Chaperone NapD (93 aa).

The protein belongs to the NapD family. As to quaternary structure, interacts with the cytoplasmic NapA precursor.

Its subcellular location is the cytoplasm. Functionally, chaperone for NapA, the catalytic subunit of the periplasmic nitrate reductase. It binds directly and specifically to the twin-arginine signal peptide of NapA, preventing premature interaction with the Tat translocase and premature export. The protein is Chaperone NapD of Haemophilus influenzae (strain ATCC 51907 / DSM 11121 / KW20 / Rd).